A 496-amino-acid chain; its full sequence is MLKIKLEKTTFENAKAECGLVFIINKDFDHAWVKNKKLLETFKYEGEGVFLDQENKILYAGVKEDDVHLLRESACLAVRTLKKLAFKSVKVGVYTCDTHSKDNALLENLKALFLGLKLGLYEYDTFKSNKKESVLKEAIVALELHKPCEKTCANSLEKSAKEALKYAEIMTESLNIVRDLVNTPPMIATPVYMAEVAQKVAKENHLEIHVHDEKFLEEKKMNAFLAVNKASLGVNPPRLIHLVYKPKKAKKKIALVGKGLTYDCGGLSLKPADYMVTMKADKGGGSAVIGLLNALAKLGVEAEVHGIIGATENMIGPAAYKPDDILISKEGKSIEVRNTDAEGRLVLADCLSYAQDLSPDVIVDFATLTGACVVGLGEFTSAIMGHNEELKNLFETSGLESGELLAKLPFNRHLKKLIESKIADVCNISSSRYGGAITAGLFLNEFIRDEFKDKWLHIDIAGPAYVEKEWDVNSFGASGAGVRACTAFVEEFLKKA.

Mn(2+) is bound by residues K258 and D263. K270 is a catalytic residue. 3 residues coordinate Mn(2+): D281, D340, and E342. R344 is a catalytic residue.

Belongs to the peptidase M17 family. Mn(2+) serves as cofactor.

The protein resides in the cytoplasm. It catalyses the reaction Release of an N-terminal amino acid, Xaa-|-Yaa-, in which Xaa is preferably Leu, but may be other amino acids including Pro although not Arg or Lys, and Yaa may be Pro. Amino acid amides and methyl esters are also readily hydrolyzed, but rates on arylamides are exceedingly low.. The enzyme catalyses Release of an N-terminal amino acid, preferentially leucine, but not glutamic or aspartic acids.. Its function is as follows. Presumably involved in the processing and regular turnover of intracellular proteins. Catalyzes the removal of unsubstituted N-terminal amino acids from various peptides. The protein is Probable cytosol aminopeptidase of Helicobacter pylori (strain Shi470).